The following is a 455-amino-acid chain: Pentatricopeptide repeat-containing protein At3g26630, chloroplastic (455 aa).

Residues 1–19 (MAAPSPSSPPNLLSPPPFR) constitute a chloroplast transit peptide. 11 PPR repeats span residues 51-81 (DQLL…LQSP), 82-117 (STFT…QSQF), 118-152 (DKFT…GFFN), 153-187 (DVFF…SIVS), 188-214 (WTTM…MPMR), 215-249 (NVVS…DVKP), 250-284 (NEFT…GFVL), 285-315 (DCFL…MQGK), 316-350 (SLAT…ASVE), 352-387 (DAIT…GISP), and 388-418 (IREH…MDSD).

It belongs to the PPR family. PCMP-A subfamily.

Its subcellular location is the plastid. It is found in the chloroplast. The sequence is that of Pentatricopeptide repeat-containing protein At3g26630, chloroplastic (PCMP-A6) from Arabidopsis thaliana (Mouse-ear cress).